A 902-amino-acid chain; its full sequence is Aconitate hydratase A (902 aa).

The [4Fe-4S] cluster site is built by cysteine 441, cysteine 507, and cysteine 510.

The protein belongs to the aconitase/IPM isomerase family. Monomer. Requires [4Fe-4S] cluster as cofactor.

The catalysed reaction is citrate = D-threo-isocitrate. It carries out the reaction (2S,3R)-3-hydroxybutane-1,2,3-tricarboxylate = 2-methyl-cis-aconitate + H2O. Its pathway is carbohydrate metabolism; tricarboxylic acid cycle; isocitrate from oxaloacetate: step 2/2. The protein operates within organic acid metabolism; propanoate degradation. In terms of biological role, involved in the catabolism of short chain fatty acids (SCFA) via the tricarboxylic acid (TCA)(acetyl degradation route) and probably the 2-methylcitrate cycle I (propionate degradation route). Catalyzes the reversible isomerization of citrate to isocitrate via cis-aconitate. Also able to catalyze the hydration of cis-homoaconitate to yield (R)-homocitrate, but with a lower efficiency. Could catalyze the hydration of 2-methyl-cis-aconitate to yield (2R,3S)-2-methylisocitrate. The apo form of AcnA functions as a RNA-binding regulatory protein. The chain is Aconitate hydratase A (acoA) from Thermus thermophilus (strain ATCC 27634 / DSM 579 / HB8).